The sequence spans 289 residues: Protease HtpX (289 aa).

2 helical membrane-spanning segments follow: residues 5–25 (IVLFAITNIAVLILASIVMSL) and 33–53 (MSGLLVMALILGFGGSLISLL). H140 contributes to the Zn(2+) binding site. E141 is an active-site residue. A Zn(2+)-binding site is contributed by H144. 2 consecutive transmembrane segments (helical) span residues 155 to 175 (LLQGVLNTFVIVLARVVGGFI) and 193 to 213 (GIVLVLELLFGLFATIITMWF). Position 218 (E218) interacts with Zn(2+).

It belongs to the peptidase M48B family. The cofactor is Zn(2+).

Its subcellular location is the cell inner membrane. This is Protease HtpX from Xylella fastidiosa (strain M23).